A 501-amino-acid polypeptide reads, in one-letter code: MQPLLQLQGITKSFPGVKALSGAALNVYPGKVMALVGENGAGKSTMMKVLTGIYRKDAGSIHFLGQEVDFNGPKASQEAGIGIIHQELNLIPQLTIAENIFLGREFTNRFGRIDWNKMYAEADKLLKRLNLRYDSRRMVGDLSIGDQQMVEIAKVLSFESKVIIMDEPTDALTDTETASLFSVINELQSQGCGIVYISHRLKEIFEICDDITVFRDGQFIGERPVSDLEEDTLIEMMVGRKLEDQYPRSNKAPGEVRLKVQNLSGPGVDSVSFTVRKGEILGVAGLMGAGRTELMKILYGALPRTGGNVTLDGRDVVTRKPQDGLANGIVYISEDRKRDGLVLGMSVKENMSLTALRYFSHAGGRLKHAEEQLTVADFIRLFNVKTPSMEQPIGLLSGGNQQKVAIARGLMTRPNVLILDEPTRGVDVGAKKEIYQLINQFKEEGLSIILVSSEMPEVLGMSDRIIVMHEGRLSGDFPIEQATQEALMAAAVGKQYGAKQE.

ABC transporter domains are found at residues 5-241 and 252-495; these read LQLQ…VGRK and APGE…VGKQ. ATP is bound at residue 37 to 44; it reads GENGAGKS.

It belongs to the ABC transporter superfamily. Ribose importer (TC 3.A.1.2.1) family. The complex is composed of an ATP-binding protein (RbsA), two transmembrane proteins (RbsC) and a solute-binding protein (RbsB).

The protein localises to the cell inner membrane. The catalysed reaction is D-ribose(out) + ATP + H2O = D-ribose(in) + ADP + phosphate + H(+). In terms of biological role, part of the ABC transporter complex RbsABC involved in ribose import. Responsible for energy coupling to the transport system. The sequence is that of Ribose import ATP-binding protein RbsA from Pectobacterium atrosepticum (strain SCRI 1043 / ATCC BAA-672) (Erwinia carotovora subsp. atroseptica).